The primary structure comprises 477 residues: Adenylyl cyclase-associated protein 2 (477 aa).

At Ala-2 the chain carries N-acetylalanine. Disordered stretches follow at residues 225-261 and 274-321; these read LSSGPGLPPPPPPLPPPGPPPLFENEGKKEESSPSRS and TKGL…SQKH. The span at 230–246 shows a compositional bias: pro residues; it reads GLPPPPPPLPPPGPPPL. Residues 298 to 320 show a composition bias toward low complexity; sequence QTQSPTKSHTPSPTSPKSYPSQK. Phosphoserine is present on residues Ser-301 and Ser-309. In terms of domain architecture, C-CAP/cofactor C-like spans 317-455; sequence PSQKHAPVLE…QDGDYREFPI (139 aa).

Belongs to the CAP family.

The protein resides in the cell membrane. Its function is as follows. Involved in the regulation of actin polymerization. The polypeptide is Adenylyl cyclase-associated protein 2 (CAP2) (Homo sapiens (Human)).